A 329-amino-acid polypeptide reads, in one-letter code: Isopenicillin N synthase (329 aa).

Arg87, Tyr91, and Tyr189 together coordinate isopenicillin N. Positions 87, 91, 189, 212, and 214 each coordinate N-[(5S)-5-amino-5-carboxypentanoyl]-L-cysteinyl-D-valine. In terms of domain architecture, Fe2OG dioxygenase spans 180 to 286 (TLSAVTLIHY…RLSLPFFLHA (107 aa)). Fe(2+) contacts are provided by His212, Asp214, and His268. Arg277 is a 2-oxoglutarate binding site. Ser279 serves as a coordination point for isopenicillin N. Ser279 lines the N-[(5S)-5-amino-5-carboxypentanoyl]-L-cysteinyl-D-valine pocket.

The protein belongs to the iron/ascorbate-dependent oxidoreductase family. It depends on Fe cation as a cofactor. The cofactor is L-ascorbate.

It catalyses the reaction N-[(5S)-5-amino-5-carboxypentanoyl]-L-cysteinyl-D-valine + O2 = isopenicillin N + 2 H2O. It functions in the pathway antibiotic biosynthesis; penicillin G biosynthesis; penicillin G from L-alpha-aminoadipate and L-cysteine and L-valine: step 2/3. Removes, in the presence of oxygen, 4 hydrogen atoms from delta-L-(alpha-aminoadipyl)-L-cysteinyl-D-valine (ACV) to form the azetidinone and thiazolidine rings of isopenicillin. The protein is Isopenicillin N synthase (pcbC) of Streptomyces griseus.